The sequence spans 316 residues: Probable protein-L-isoaspartate O-methyltransferase (316 aa).

S-adenosyl-L-homocysteine-binding positions include 103 to 106, His-111, Ser-136, 157 to 158, 187 to 188, Thr-263, and Gln-268; these read ATIS, EH, and DG. The active site involves Ser-106.

Belongs to the methyltransferase superfamily. L-isoaspartyl/D-aspartyl protein methyltransferase family.

The protein resides in the cytoplasm. Its subcellular location is the cytosol. The enzyme catalyses [protein]-L-isoaspartate + S-adenosyl-L-methionine = [protein]-L-isoaspartate alpha-methyl ester + S-adenosyl-L-homocysteine. Functionally, initiates the repair of damaged proteins by catalyzing methyl esterification of L-isoaspartyl and D-aspartyl residues produced by spontaneous isomerization and racemization of L-aspartyl and L-asparaginyl residues in aging peptides and proteins. In Dictyostelium discoideum (Social amoeba), this protein is Probable protein-L-isoaspartate O-methyltransferase (pcmA).